Consider the following 251-residue polypeptide: Hydroxyacylglutathione hydrolase (251 aa).

Residues histidine 53, histidine 55, aspartate 57, histidine 58, histidine 110, aspartate 127, and histidine 165 each contribute to the Zn(2+) site.

Belongs to the metallo-beta-lactamase superfamily. Glyoxalase II family. In terms of assembly, monomer. It depends on Zn(2+) as a cofactor.

The enzyme catalyses an S-(2-hydroxyacyl)glutathione + H2O = a 2-hydroxy carboxylate + glutathione + H(+). It functions in the pathway secondary metabolite metabolism; methylglyoxal degradation; (R)-lactate from methylglyoxal: step 2/2. In terms of biological role, thiolesterase that catalyzes the hydrolysis of S-D-lactoyl-glutathione to form glutathione and D-lactic acid. The polypeptide is Hydroxyacylglutathione hydrolase (Salmonella dublin (strain CT_02021853)).